The primary structure comprises 320 residues: Aspartate carbamoyltransferase catalytic subunit (320 aa).

2 residues coordinate carbamoyl phosphate: arginine 65 and threonine 66. Lysine 93 contributes to the L-aspartate binding site. 3 residues coordinate carbamoyl phosphate: arginine 115, histidine 143, and glutamine 146. The L-aspartate site is built by arginine 176 and arginine 230. 2 residues coordinate carbamoyl phosphate: glycine 271 and proline 272.

Belongs to the aspartate/ornithine carbamoyltransferase superfamily. ATCase family. In terms of assembly, heterododecamer (2C3:3R2) of six catalytic PyrB chains organized as two trimers (C3), and six regulatory PyrI chains organized as three dimers (R2).

The catalysed reaction is carbamoyl phosphate + L-aspartate = N-carbamoyl-L-aspartate + phosphate + H(+). The protein operates within pyrimidine metabolism; UMP biosynthesis via de novo pathway; (S)-dihydroorotate from bicarbonate: step 2/3. Its function is as follows. Catalyzes the condensation of carbamoyl phosphate and aspartate to form carbamoyl aspartate and inorganic phosphate, the committed step in the de novo pyrimidine nucleotide biosynthesis pathway. This chain is Aspartate carbamoyltransferase catalytic subunit, found in Maricaulis maris (strain MCS10) (Caulobacter maris).